The primary structure comprises 585 residues: Probable phosphoglucomutase, cytoplasmic 2 (585 aa).

Residues 1 to 20 are disordered; the sequence is MVSFKVSLVSTSPIDGQKPG. R25 and S124 together coordinate alpha-D-glucose 1,6-bisphosphate. S124 acts as the Phosphoserine intermediate in catalysis. Residues S124, D301, D303, and D305 each contribute to the Mg(2+) site. The residue at position 124 (S124) is a Phosphoserine. The alpha-D-glucose 1,6-bisphosphate site is built by D305, R306, T369, E388, S390, and K401.

Belongs to the phosphohexose mutase family. In terms of assembly, monomer. The cofactor is Mg(2+).

The protein resides in the cytoplasm. It catalyses the reaction alpha-D-glucose 1-phosphate = alpha-D-glucose 6-phosphate. It carries out the reaction O-phospho-L-seryl-[protein] + alpha-D-glucose 1-phosphate = alpha-D-glucose 1,6-bisphosphate + L-seryl-[protein]. The catalysed reaction is alpha-D-glucose 1,6-bisphosphate + L-seryl-[protein] = O-phospho-L-seryl-[protein] + alpha-D-glucose 6-phosphate. Its function is as follows. Catalyzes the reversible isomerization of alpha-D-glucose 1-phosphate to alpha-D-glucose 6-phosphate. The mechanism proceeds via the intermediate compound alpha-D-glucose 1,6-bisphosphate. This enzyme participates in both the breakdown and synthesis of glucose. The polypeptide is Probable phosphoglucomutase, cytoplasmic 2 (Arabidopsis thaliana (Mouse-ear cress)).